The following is a 104-amino-acid chain: Pyrimidine/purine nucleoside phosphorylase (104 aa).

This sequence belongs to the nucleoside phosphorylase PpnP family.

The enzyme catalyses a purine D-ribonucleoside + phosphate = a purine nucleobase + alpha-D-ribose 1-phosphate. It catalyses the reaction adenosine + phosphate = alpha-D-ribose 1-phosphate + adenine. It carries out the reaction cytidine + phosphate = cytosine + alpha-D-ribose 1-phosphate. The catalysed reaction is guanosine + phosphate = alpha-D-ribose 1-phosphate + guanine. The enzyme catalyses inosine + phosphate = alpha-D-ribose 1-phosphate + hypoxanthine. It catalyses the reaction thymidine + phosphate = 2-deoxy-alpha-D-ribose 1-phosphate + thymine. It carries out the reaction uridine + phosphate = alpha-D-ribose 1-phosphate + uracil. The catalysed reaction is xanthosine + phosphate = alpha-D-ribose 1-phosphate + xanthine. Catalyzes the phosphorolysis of diverse nucleosides, yielding D-ribose 1-phosphate and the respective free bases. Can use uridine, adenosine, guanosine, cytidine, thymidine, inosine and xanthosine as substrates. Also catalyzes the reverse reactions. This is Pyrimidine/purine nucleoside phosphorylase from Janthinobacterium sp. (strain Marseille) (Minibacterium massiliensis).